A 1705-amino-acid chain; its full sequence is ALK tyrosine kinase receptor (1705 aa).

Residues M1–C21 form the signal peptide. Over A22–S1035 the chain is Extracellular. N40 and N48 each carry an N-linked (GlcNAc...) asparagine glycan. The segment at R54 to L76 is heparin-binding region. N-linked (GlcNAc...) asparagine glycans are attached at residues N124, N259, N334, N434, N442, N458, N484, N578, N590, and N635. The MAM domain occupies S486–L644. The cysteines at positions 694 and 707 are disulfide-linked. Residue N717 is glycosylated (N-linked (GlcNAc...) asparagine). Cysteines 788 and 799 form a disulfide. Residues N808 and N881 are each glycosylated (N-linked (GlcNAc...) asparagine). A disordered region spans residues G842–P892. The cysteines at positions 903 and 921 are disulfide-linked. The N-linked (GlcNAc...) asparagine glycan is linked to N979. Cystine bridges form between C980–C988 and C983–C997. Positions C980–T1016 are EGF-like. A glycan (N-linked (GlcNAc...) asparagine) is linked at N1014. A helical membrane pass occupies residues V1036–Y1056. Over R1057–L1705 the chain is Cytoplasmic. A Protein kinase domain is found at I1113 to V1389. ATP-binding positions include L1119–V1127 and K1147. Residue D1246 is the Proton acceptor of the active site. Disordered stretches follow at residues P1395–N1499, A1505–T1524, Q1532–Q1557, Q1588–T1613, and G1646–P1681. Polar residues predominate over residues K1484–Q1493. 2 stretches are compositionally biased toward low complexity: residues Q1532–Q1544 and Q1588–P1602. Pro residues predominate over residues L1603–T1613.

Belongs to the protein kinase superfamily. Tyr protein kinase family. Insulin receptor subfamily. In terms of assembly, homodimer; homodimerizes upon binding to alkal ligands (alkal1, alkal2a or alkal2b). Highly expressed in the developing central nervous system: highly expressed in brain, with much lower expression in heart, caudal fin and testis.

Its subcellular location is the cell membrane. The enzyme catalyses L-tyrosyl-[protein] + ATP = O-phospho-L-tyrosyl-[protein] + ADP + H(+). Inhibited by ALK inhibitor TAE684. In terms of biological role, receptor tyrosine kinase required for neurogenesis in the developing central nervous system. Following activation by alkal ligands (alkal1, alkal2a or alkal2b) at the cell surface, transduces an extracellular signal into an intracellular response. Ligand-binding to the extracellular domain induces tyrosine kinase activation, resulting in the activation of the mitogen-activated protein kinase (MAPK) pathway. Phosphorylates almost exclusively at the first tyrosine of the Y-x-x-x-Y-Y motif. In Danio rerio (Zebrafish), this protein is ALK tyrosine kinase receptor.